The sequence spans 726 residues: NHL repeat-containing protein 2 (726 aa).

6 NHL repeats span residues 212 to 254 (KLYK…VWKN), 265 to 307 (NPGR…IDLE), 335 to 369 (ISSP…IWAL), 409 to 439 (FAQP…VRTV), 461 to 505 (AFGD…VDPK), and 518 to 562 (ASNM…LDLE).

As to quaternary structure, monomer.

It localises to the cytoplasm. The protein localises to the cytosol. In terms of biological role, required for normal embryonic development. The chain is NHL repeat-containing protein 2 (NHLRC2) from Bos taurus (Bovine).